A 608-amino-acid polypeptide reads, in one-letter code: Putative pentatricopeptide repeat-containing protein At1g16830 (608 aa).

PPR repeat units follow at residues 107–141 (KPRV…GFVP), 142–172 (NTRA…IRFR), 173–210 (NFFS…GFYP), 211–245 (NRER…GISV), 246–280 (SVNV…GCSP), 281–315 (NLVT…GLAP), 316–350 (DIVL…KLVP), 351–381 (DQYT…IGTD), 383–417 (DLVT…DFAL), 418–452 (DCYT…KKHL), 453–487 (DAHF…KYPL), 488–522 (DVVS…GIYP), and 523–557 (NRRT…GVEL).

Belongs to the PPR family. P subfamily.

The sequence is that of Putative pentatricopeptide repeat-containing protein At1g16830 from Arabidopsis thaliana (Mouse-ear cress).